The following is a 1698-amino-acid chain: Protein 4.1 homolog (1698 aa).

The tract at residues 1–31 (MPAEIKPSAPAEPETPTKSKPKSSSSSHGKP) is disordered. The segment covering 12-27 (EPETPTKSKPKSSSSS) has biased composition (low complexity). An FERM domain is found at 32-314 (ALARVTLLDG…EHHTFFRLMT (283 aa)). Residues 317-434 (PVSKSKMFPV…KEEKERKERE (118 aa)) are hydrophilic. Disordered stretches follow at residues 335–361 (GRTQAESTNTPVDRTPPKFNRTLSGAR) and 374–710 (EKEK…SDPT). Basic and acidic residues predominate over residues 374–448 (EKEKVARKSS…EEKKKAEKAA (75 aa)). Residues 449-461 (KAALAAGAAAGAA) show a composition bias toward low complexity. 3 positions are modified to phosphoserine: S471, S474, and S478. Residues 499–514 (KDGKDKSGKDKDKEVG) are compositionally biased toward basic and acidic residues. Positions 562–571 (DGNTSPTRKS) are enriched in polar residues. S566 is subject to Phosphoserine. The span at 579–589 (YDQDPNSRKSG) shows a compositional bias: basic and acidic residues. Residues 594 to 603 (EQLSPTSQQK) show a composition bias toward polar residues. Over residues 618–627 (ALKETAEKLK) the composition is skewed to basic and acidic residues. 2 positions are modified to phosphoserine: S659 and S687. Residues 684–696 (RSYSPTKGPQGYS) are compositionally biased toward polar residues. Phosphothreonine is present on T689. Phosphoserine is present on residues S697, S1398, S1401, and S1402. Positions 1286–1698 (GEIVQVDPND…EKIEIQQQTQ (413 aa)) are C-terminal (CTD). T1407 bears the Phosphothreonine mark. Over residues 1509–1532 (LGKNAKTEQLEEKTVATTRTHDPN) the composition is skewed to basic and acidic residues. Residues 1509-1599 (LGKNAKTEQL…SPLFTTSATT (91 aa)) form a disordered region. Over residues 1533 to 1554 (KQQQRVVTQEVKTTATVTSGDQ) the composition is skewed to polar residues. Residues 1561-1571 (VSSTSSGDSGT) show a composition bias toward low complexity. Over residues 1584 to 1599 (RTDNQKSPLFTTSATT) the composition is skewed to polar residues. At S1590 the chain carries Phosphoserine.

As to expression, at onset of germ band retraction, expression is seen in epidermis, hindgut and foregut. During retraction, expression extends to tracheal branches and salivary glands.

Its subcellular location is the cell junction. The protein localises to the septate junction. Its function is as follows. An integral component of the septate junction. May play a role in cell-cell interactions that are necessary for proper development. Vital for embryonic development. This is Protein 4.1 homolog (cora) from Drosophila melanogaster (Fruit fly).